The chain runs to 360 residues: Methyltransferase pvhD (360 aa).

Residues 201-202 (SG), Asp-227, 251-252 (DL), Arg-267, and Arg-268 contribute to the S-adenosyl-L-methionine site.

This sequence belongs to the class I-like SAM-binding methyltransferase superfamily. Cation-independent O-methyltransferase family.

Its pathway is secondary metabolite biosynthesis. Its function is as follows. Methyltransferase; part of the gene cluster that mediates the biosynthesis of varicidin A, an antifungal natural product containing a cis-octahydrodecalin core. The PKS module of pvhA together with the enoylreductase pvhC catalyze the formation of the polyketide unit which is then conjugated to L-isoleucine by the condensation domain of the NRPS module. Activity of the Dieckmann cyclase domain (RED) of pvhA results in release of an acyclic tetramate. The cytochrome P450 monooxygenase pvhE then catalyzes the oxidation of the C21 methyl group to a to carboxylate group. The methyltransferase pvhD then further methylates the pvhE product. The Diels-Alderase pvhB is able to catalyze Diels-Alder cycloaddition using both pvhE and pvhD products as substrates to form the decalin ring, yielding varicidin B and A, respectively. The protein is Methyltransferase pvhD of Talaromyces variabilis (Penicillium variabile).